We begin with the raw amino-acid sequence, 331 residues long: Hyaluronidase (331 aa).

2 disulfide bridges follow: Cys19–Cys308 and Cys185–Cys197. Asn79 carries an N-linked (GlcNAc...) asparagine glycan. Residue Glu109 is the Proton donor of the active site. N-linked (GlcNAc...) asparagine glycosylation is present at Asn325.

Belongs to the glycosyl hydrolase 56 family. In terms of tissue distribution, expressed by the venom gland.

It is found in the secreted. The enzyme catalyses Random hydrolysis of (1-&gt;4)-linkages between N-acetyl-beta-D-glucosamine and D-glucuronate residues in hyaluronate.. Functionally, hydrolyzes high molecular weight hyaluronic acid to produce small oligosaccharides. This Dolichovespula maculata (Bald-faced hornet) protein is Hyaluronidase.